The sequence spans 193 residues: Holliday junction branch migration complex subunit RuvA (193 aa).

A domain I region spans residues 1 to 64 (MIGRIAGTLI…EDAHLLYGFG (64 aa)). The domain II stretch occupies residues 65-143 (TAAERETFRQ…ADLGTVPGGP (79 aa)). A flexible linker region spans residues 144-151 (AVSDDAVD). Residues 151–193 (DVLNALLALGYSDKEAAQAIKQVPAGTGVSEGIKLALKALSKG) are domain III.

This sequence belongs to the RuvA family. Homotetramer. Forms an RuvA(8)-RuvB(12)-Holliday junction (HJ) complex. HJ DNA is sandwiched between 2 RuvA tetramers; dsDNA enters through RuvA and exits via RuvB. An RuvB hexamer assembles on each DNA strand where it exits the tetramer. Each RuvB hexamer is contacted by two RuvA subunits (via domain III) on 2 adjacent RuvB subunits; this complex drives branch migration. In the full resolvosome a probable DNA-RuvA(4)-RuvB(12)-RuvC(2) complex forms which resolves the HJ.

Its subcellular location is the cytoplasm. Its function is as follows. The RuvA-RuvB-RuvC complex processes Holliday junction (HJ) DNA during genetic recombination and DNA repair, while the RuvA-RuvB complex plays an important role in the rescue of blocked DNA replication forks via replication fork reversal (RFR). RuvA specifically binds to HJ cruciform DNA, conferring on it an open structure. The RuvB hexamer acts as an ATP-dependent pump, pulling dsDNA into and through the RuvAB complex. HJ branch migration allows RuvC to scan DNA until it finds its consensus sequence, where it cleaves and resolves the cruciform DNA. The chain is Holliday junction branch migration complex subunit RuvA from Ralstonia nicotianae (strain ATCC BAA-1114 / GMI1000) (Ralstonia solanacearum).